We begin with the raw amino-acid sequence, 185 residues long: Large ribosomal subunit protein uL5 (185 aa).

This sequence belongs to the universal ribosomal protein uL5 family. In terms of assembly, part of the 50S ribosomal subunit; part of the 5S rRNA/L5/L18/L25 subcomplex. Contacts the 5S rRNA and the P site tRNA. Forms a bridge to the 30S subunit in the 70S ribosome.

Functionally, this is one of the proteins that bind and probably mediate the attachment of the 5S RNA into the large ribosomal subunit, where it forms part of the central protuberance. In the 70S ribosome it contacts protein S13 of the 30S subunit (bridge B1b), connecting the 2 subunits; this bridge is implicated in subunit movement. Contacts the P site tRNA; the 5S rRNA and some of its associated proteins might help stabilize positioning of ribosome-bound tRNAs. The chain is Large ribosomal subunit protein uL5 from Magnetococcus marinus (strain ATCC BAA-1437 / JCM 17883 / MC-1).